A 100-amino-acid chain; its full sequence is Urease subunit gamma (100 aa).

The protein belongs to the urease gamma subunit family. As to quaternary structure, heterotrimer of UreA (gamma), UreB (beta) and UreC (alpha) subunits. Three heterotrimers associate to form the active enzyme.

It localises to the cytoplasm. It catalyses the reaction urea + 2 H2O + H(+) = hydrogencarbonate + 2 NH4(+). Its pathway is nitrogen metabolism; urea degradation; CO(2) and NH(3) from urea (urease route): step 1/1. This is Urease subunit gamma from Pseudomonas putida (strain W619).